A 665-amino-acid polypeptide reads, in one-letter code: Transketolase (665 aa).

Substrate is bound at residue H26. Thiamine diphosphate-binding positions include H66 and 114–116; that span reads GPL. Position 155 (D155) interacts with Mg(2+). G156 and N185 together coordinate thiamine diphosphate. 2 residues coordinate Mg(2+): N185 and I187. 3 residues coordinate substrate: H261, R358, and S385. H261 lines the thiamine diphosphate pocket. Catalysis depends on E411, which acts as the Proton donor. Position 437 (F437) interacts with thiamine diphosphate. Substrate contacts are provided by H461, D469, and R520.

The protein belongs to the transketolase family. As to quaternary structure, homodimer. Mg(2+) is required as a cofactor. Requires Ca(2+) as cofactor. The cofactor is Mn(2+). Co(2+) serves as cofactor. It depends on thiamine diphosphate as a cofactor.

It carries out the reaction D-sedoheptulose 7-phosphate + D-glyceraldehyde 3-phosphate = aldehydo-D-ribose 5-phosphate + D-xylulose 5-phosphate. In terms of biological role, catalyzes the transfer of a two-carbon ketol group from a ketose donor to an aldose acceptor, via a covalent intermediate with the cofactor thiamine pyrophosphate. The polypeptide is Transketolase (tkt) (Buchnera aphidicola subsp. Schizaphis graminum (strain Sg)).